The chain runs to 174 residues: Co-chaperone protein HscB homolog (174 aa).

The J domain maps to 2–74 (NYFELFSLLP…IQRAEHLLAL (73 aa)).

Belongs to the HscB family. As to quaternary structure, interacts with HscA and stimulates its ATPase activity.

Its function is as follows. Co-chaperone involved in the maturation of iron-sulfur cluster-containing proteins. Seems to help targeting proteins to be folded toward HscA. The polypeptide is Co-chaperone protein HscB homolog (Shewanella pealeana (strain ATCC 700345 / ANG-SQ1)).